Reading from the N-terminus, the 273-residue chain is NADH-ubiquinone oxidoreductase 29.9 kDa subunit, mitochondrial (273 aa).

A mitochondrion-targeting transit peptide spans 1 to 8 (MRAALRLL).

It belongs to the complex I NDUFA5 subunit family. In terms of assembly, complex I is composed of about 40 different subunits.

It localises to the mitochondrion inner membrane. In terms of biological role, accessory subunit of the mitochondrial membrane respiratory chain NADH dehydrogenase (Complex I), that is believed not to be involved in catalysis. Complex I functions in the transfer of electrons from NADH to the respiratory chain. The immediate electron acceptor for the enzyme is believed to be ubiquinone. This Neurospora crassa (strain ATCC 24698 / 74-OR23-1A / CBS 708.71 / DSM 1257 / FGSC 987) protein is NADH-ubiquinone oxidoreductase 29.9 kDa subunit, mitochondrial (nuo-32).